Reading from the N-terminus, the 91-residue chain is Small membrane A-kinase anchor protein (91 aa).

Residue Gly2 is the site of N-myristoyl glycine attachment.

This sequence belongs to the small membrane AKAP family. May be palmitoylated at Cys-3.

It is found in the cell membrane. In terms of biological role, binds to type I regulatory subunits of protein kinase A and may anchor/target them to the plasma membrane. This Xenopus laevis (African clawed frog) protein is Small membrane A-kinase anchor protein.